The sequence spans 188 residues: Photosystem I assembly protein Ycf4 (188 aa).

The next 2 helical transmembrane spans lie at 26–48 (MLWASVSAIGGIGFLLAGLSSYF) and 68–90 (AALTFYGVAGTLLSAYLWFVFFL).

Belongs to the Ycf4 family.

It is found in the cellular thylakoid membrane. Seems to be required for the assembly of the photosystem I complex. The chain is Photosystem I assembly protein Ycf4 from Picosynechococcus sp. (strain ATCC 27264 / PCC 7002 / PR-6) (Agmenellum quadruplicatum).